The primary structure comprises 134 residues: Transcription antitermination protein NusB (134 aa).

The protein belongs to the NusB family.

Functionally, involved in transcription antitermination. Required for transcription of ribosomal RNA (rRNA) genes. Binds specifically to the boxA antiterminator sequence of the ribosomal RNA (rrn) operons. This chain is Transcription antitermination protein NusB, found in Halalkalibacterium halodurans (strain ATCC BAA-125 / DSM 18197 / FERM 7344 / JCM 9153 / C-125) (Bacillus halodurans).